Reading from the N-terminus, the 488-residue chain is Wax ester synthase/diacylglycerol acyltransferase 8 (488 aa).

Residues 1-195 (MKNEEEEPLS…AIFTIGSTMR (195 aa)) lie on the Cytoplasmic side of the membrane. His-135 functions as the Proton acceptor in the catalytic mechanism. The helical transmembrane segment at 196–214 (LIWNTLVDMFLLFATMLFL) threads the bilayer. Over 215–488 (KDTKTPLKGG…RGLLKEAYKV (274 aa)) the chain is Lumenal. N-linked (GlcNAc...) asparagine glycans are attached at residues Asn-238, Asn-252, Asn-353, and Asn-397.

The protein in the N-terminal section; belongs to the long-chain O-acyltransferase family. Mostly expressed in flowers and siliques and at low levels in stems.

It localises to the cell membrane. It is found in the endoplasmic reticulum membrane. It catalyses the reaction an acyl-CoA + a 1,2-diacyl-sn-glycerol = a triacyl-sn-glycerol + CoA. The catalysed reaction is a long chain fatty alcohol + a fatty acyl-CoA = a wax ester + CoA. It functions in the pathway glycerolipid metabolism; triacylglycerol biosynthesis. It participates in lipid metabolism. Functionally, bifunctional wax ester synthase/diacylglycerol acyltransferase. Involved in cuticular wax biosynthesis. This is Wax ester synthase/diacylglycerol acyltransferase 8 from Arabidopsis thaliana (Mouse-ear cress).